We begin with the raw amino-acid sequence, 1604 residues long: Ubiquitin carboxyl-terminal hydrolase 32 (1604 aa).

EF-hand domains follow at residues 91–126 (KDEE…VDGK), 228–263 (IRPS…CCRG), and 264–299 (PLAE…LLEV). Positions 241, 243, 245, 247, 252, 277, 279, 281, and 288 each coordinate Ca(2+). The 217-residue stretch at 369 to 585 (ATPEEEGQII…SNLALPRPVI (217 aa)) folds into the DUSP domain. One can recognise a USP domain in the interval 734 to 1567 (TGLSNLGNTC…SAYILFYEQQ (834 aa)). Catalysis depends on C743, which acts as the Nucleophile. Residue Y1173 is modified to Phosphotyrosine. Phosphoserine is present on S1350. Residues 1353–1432 (EEDVLLSKSP…SKENLDTSKE (80 aa)) are disordered. The span at 1360-1370 (KSPSSLSANVT) shows a compositional bias: polar residues. The span at 1371-1399 (SSPKGSPSSSRKSGASCPSSKNSSPNSSP) shows a compositional bias: low complexity. S1372 and S1376 each carry phosphoserine. A compositionally biased stretch (polar residues) spans 1415-1424 (GSKNKLSNSK). A Phosphoserine modification is found at S1454. The disordered stretch occupies residues 1484–1504 (SNGQLGNHSEEDSTDDQREET). Residues 1491–1504 (HSEEDSTDDQREET) are compositionally biased toward basic and acidic residues. H1526 acts as the Proton acceptor in catalysis. A Phosphoserine modification is found at S1588. C1601 is modified (cysteine methyl ester). C1601 carries S-farnesyl cysteine lipidation. Positions 1602 to 1604 (VLQ) are cleaved as a propeptide — removed in mature form.

The protein belongs to the peptidase C19 family.

It is found in the golgi apparatus membrane. The catalysed reaction is Thiol-dependent hydrolysis of ester, thioester, amide, peptide and isopeptide bonds formed by the C-terminal Gly of ubiquitin (a 76-residue protein attached to proteins as an intracellular targeting signal).. Its function is as follows. Deubiquitinase that can remove conjugated ubiquitin from target proteins, such as RAB7A and LAMTOR1. Acts as a positive regulator of the mTORC1 signaling by mediating deubiquitination of LAMTOR1, thereby promoting the association between LAMTOR1 and the lysosomal V-ATPase complex and subsequent activation of the mTORC1 complex. This Mus musculus (Mouse) protein is Ubiquitin carboxyl-terminal hydrolase 32.